The chain runs to 215 residues: uncharacterized protein (215 aa).

The protein resides in the mitochondrion. This is an uncharacterized protein from Arabidopsis thaliana (Mouse-ear cress).